A 78-amino-acid polypeptide reads, in one-letter code: UPF0349 protein RBAM_029300 (78 aa).

It belongs to the UPF0349 family.

This Bacillus velezensis (strain DSM 23117 / BGSC 10A6 / LMG 26770 / FZB42) (Bacillus amyloliquefaciens subsp. plantarum) protein is UPF0349 protein RBAM_029300.